A 267-amino-acid polypeptide reads, in one-letter code: LexA repressor (267 aa).

Residues 1–44 (MSIDESSDNPTPRPKLGRPPKSEADKRAEKEAQKDGKKPALSTR) form a disordered region. Over residues 20–38 (PKSEADKRAEKEAQKDGKK) the composition is skewed to basic and acidic residues. A DNA-binding region (H-T-H motif) is located at residues 65 to 85 (IREIADAVGLHSTSSVSYHLT). Residues 111–140 (GQLTNESTKKNAGSPQPTSAAIPEPTTEGE) are disordered. Over residues 112–129 (QLTNESTKKNAGSPQPTS) the composition is skewed to polar residues. Catalysis depends on for autocatalytic cleavage activity residues Ser191 and Lys228.

The protein belongs to the peptidase S24 family. In terms of assembly, homodimer.

It catalyses the reaction Hydrolysis of Ala-|-Gly bond in repressor LexA.. Represses a number of genes involved in the response to DNA damage (SOS response), including recA and lexA. In the presence of single-stranded DNA, RecA interacts with LexA causing an autocatalytic cleavage which disrupts the DNA-binding part of LexA, leading to derepression of the SOS regulon and eventually DNA repair. The protein is LexA repressor of Corynebacterium jeikeium (strain K411).